A 122-amino-acid chain; its full sequence is Large ribosomal subunit protein uL14c (122 aa).

The protein belongs to the universal ribosomal protein uL14 family. As to quaternary structure, part of the 50S ribosomal subunit.

The protein localises to the plastid. It is found in the chloroplast. Binds to 23S rRNA. This is Large ribosomal subunit protein uL14c from Oenothera biennis (German evening primrose).